Consider the following 320-residue polypeptide: uncharacterized protein (320 aa).

The first 23 residues, 1–23 (MKLNLRFPSYFLPVVAASAFLVS), serve as a signal peptide directing secretion. C24 is lipidated: N-palmitoyl cysteine. A lipid anchor (S-diacylglycerol cysteine) is attached at C24. Residues 160–181 (KNHEHGHTHKNGETHEHDHDHH) are disordered.

It localises to the cell membrane. This is an uncharacterized protein from Mycoplasma pneumoniae (strain ATCC 29342 / M129 / Subtype 1) (Mycoplasmoides pneumoniae).